Consider the following 885-residue polypeptide: Protein transport protein SEC24-1 (885 aa).

The Zn(2+) site is built by Cys164, Cys167, Cys186, and Cys189. The zinc finger-like stretch occupies residues 164–189; sequence CRRCRSYLNPFVAFIEQGRRWQCNIC. Positions 296-332 are disordered; sequence DDYEESDDDDDEDDDDEEEDNEEEEEEEEDEEDDDDS.

This sequence belongs to the SEC23/SEC24 family. SEC24 subfamily. In terms of assembly, the COPII coat is composed of at least 5 proteins: the SEC23/24 complex, the SEC13/31 complex, and the protein SAR1. Golgi apparatus membrane; Peripheral membrane protein; Cytoplasmic side.

It is found in the cytoplasm. The protein resides in the cytoplasmic vesicle. It localises to the COPII-coated vesicle membrane. The protein localises to the endoplasmic reticulum membrane. Its subcellular location is the golgi apparatus membrane. Functionally, component of the coat protein complex II (COPII) which promotes the formation of transport vesicles from the endoplasmic reticulum (ER). The coat has two main functions, the physical deformation of the endoplasmic reticulum membrane into vesicles and the selection of cargo molecules. The polypeptide is Protein transport protein SEC24-1 (SEC241) (Saccharomyces uvarum (strain ATCC 76518 / CBS 7001 / CLIB 283 / NBRC 10550 / MCYC 623 / NCYC 2669 / NRRL Y-11845) (Yeast)).